Consider the following 63-residue polypeptide: Small ribosomal subunit protein bS21 (63 aa).

The protein belongs to the bacterial ribosomal protein bS21 family.

In Phocaeicola vulgatus (strain ATCC 8482 / DSM 1447 / JCM 5826 / CCUG 4940 / NBRC 14291 / NCTC 11154) (Bacteroides vulgatus), this protein is Small ribosomal subunit protein bS21.